The sequence spans 232 residues: Large ribosomal subunit protein uL1 (232 aa).

It belongs to the universal ribosomal protein uL1 family. As to quaternary structure, part of the 50S ribosomal subunit.

Binds directly to 23S rRNA. The L1 stalk is quite mobile in the ribosome, and is involved in E site tRNA release. In terms of biological role, protein L1 is also a translational repressor protein, it controls the translation of the L11 operon by binding to its mRNA. The polypeptide is Large ribosomal subunit protein uL1 (Burkholderia cenocepacia (strain ATCC BAA-245 / DSM 16553 / LMG 16656 / NCTC 13227 / J2315 / CF5610) (Burkholderia cepacia (strain J2315))).